The primary structure comprises 110 residues: Movement protein TGB2 (110 aa).

The Cytoplasmic segment spans residues 1-10 (MSGAHHLTPP). Residues 11–34 (TDYGKPVLAASIGISLALLVYTAT) form a helical membrane-spanning segment. Residues 35 to 76 (RSTLPHVGDNLHALPHGGRYVDGTKSISYFSPSASKTRDPFP) are Lumenal-facing. Residues 77-92 (FAFLLILTLSGLILLL) form a helical membrane-spanning segment. Residues 93 to 110 (SRRRSNPHSCPSCGTPHA) are Cytoplasmic-facing.

Belongs to the Tymovirales TGBp2 protein family.

The protein localises to the host endoplasmic reticulum membrane. Its function is as follows. Plays a role in viral cell-to-cell propagation, by facilitating genome transport to neighboring plant cells through plasmosdesmata,. The protein is Movement protein TGB2 of Plantago asiatica (P1AMV).